The sequence spans 60 residues: Sperm protamine P1 (60 aa).

A disordered region spans residues 1–60 (MARYRHSRSRSRSRYQRRRRRRSRYRSQRRRYRRRRGSRRRRRRGRRRGYRRRYSRRRRY).

The protein belongs to the protamine P1 family. In terms of tissue distribution, testis.

It is found in the nucleus. The protein resides in the chromosome. Functionally, protamines substitute for histones in the chromatin of sperm during the haploid phase of spermatogenesis. They compact sperm DNA into a highly condensed, stable and inactive complex. The protein is Sperm protamine P1 (PRM1) of Phascolarctos cinereus (Koala).